The chain runs to 138 residues: Small ribosomal subunit protein uS11c (138 aa).

The disordered stretch occupies residues 1-24 (MIKPIPRISSRRNGRIGSRKTGRR). A compositionally biased stretch (basic residues) spans 9–24 (SSRRNGRIGSRKTGRR).

Belongs to the universal ribosomal protein uS11 family. In terms of assembly, part of the 30S ribosomal subunit.

The protein localises to the plastid. It is found in the chloroplast. The protein is Small ribosomal subunit protein uS11c of Lemna minor (Common duckweed).